Reading from the N-terminus, the 314-residue chain is Mycothiol acetyltransferase (314 aa).

N-acetyltransferase domains follow at residues 18-156 and 168-314; these read ATIR…RPLA and IRIA…MYQL. Glutamate 38 lines the 1D-myo-inositol 2-(L-cysteinylamino)-2-deoxy-alpha-D-glucopyranoside pocket. 92–94 is an acetyl-CoA binding site; sequence VVV. 1D-myo-inositol 2-(L-cysteinylamino)-2-deoxy-alpha-D-glucopyranoside is bound by residues glutamate 195, lysine 234, and glutamate 248. Residues 252–254 and 259–265 contribute to the acetyl-CoA site; these read VGL and QGHGLGR. 1D-myo-inositol 2-(L-cysteinylamino)-2-deoxy-alpha-D-glucopyranoside is bound at residue tyrosine 286.

It belongs to the acetyltransferase family. MshD subfamily. As to quaternary structure, monomer.

It carries out the reaction 1D-myo-inositol 2-(L-cysteinylamino)-2-deoxy-alpha-D-glucopyranoside + acetyl-CoA = mycothiol + CoA + H(+). Catalyzes the transfer of acetyl from acetyl-CoA to desacetylmycothiol (Cys-GlcN-Ins) to form mycothiol. The protein is Mycothiol acetyltransferase of Catenulispora acidiphila (strain DSM 44928 / JCM 14897 / NBRC 102108 / NRRL B-24433 / ID139908).